Consider the following 84-residue polypeptide: UPF0248 protein Pisl_1919 (84 aa).

The protein belongs to the UPF0248 family.

The polypeptide is UPF0248 protein Pisl_1919 (Pyrobaculum islandicum (strain DSM 4184 / JCM 9189 / GEO3)).